The following is a 113-amino-acid chain: MHELALTAELLRLLENNAREKGIKHIKRVKLVIGALSSVLPEAVEFSFNTLKEGPLFEDAKLEIEEKPVRIRCRDCMAEKAVDHFYPLCPSCGSGRVSIIEGKEFYIDFYEGE.

A Ni(2+)-binding site is contributed by H2. Zn(2+) contacts are provided by C73, C76, C89, and C92.

This sequence belongs to the HypA/HybF family.

Its function is as follows. Involved in the maturation of [NiFe] hydrogenases. Required for nickel insertion into the metal center of the hydrogenase. In Moorella thermoacetica (strain ATCC 39073 / JCM 9320), this protein is Hydrogenase maturation factor HypA.